We begin with the raw amino-acid sequence, 619 residues long: Kinesin light chain 4 (619 aa).

S2 carries the post-translational modification N-acetylserine. The stretch at 32–150 (GLESLHSEHQ…EEEKKHLEFL (119 aa)) forms a coiled coil. Residues 55 to 88 (QQGGHEEGLVHEKARQLRRSMENIELGLSEAQVM) form a TPR 1 repeat. Residues 156–175 (YDEDGHSMEEKEGDASKDSL) show a composition bias toward basic and acidic residues. Residues 156-200 (YDEDGHSMEEKEGDASKDSLDDLFPNEEEEDSSNDLSRGQGAAAA) form a disordered region. S174 bears the Phosphoserine mark. Over residues 179–188 (FPNEEEEDSS) the composition is skewed to acidic residues. TPR repeat units lie at residues 211–244 (LRTLHNLVIQYAAQGRYEVAVPLCKQALEDLERT), 253–286 (ATMLNILALVYRDQNKYKEAAHLLNDALSIREST), 295–328 (AATLNNLAVLYGKRGKYKEAEPLCQRALEIREKV), 337–370 (AKQLNNLALLCQNQGKYEAVERYYQRALAIYERQ), and 379–412 (ARTKNNLASCYLKQGKYSEAETLYKEILTRAHVQ). At S460 the chain carries Phosphoserine. The TPR 7 repeat unit spans residues 464-497 (NTTLRNLGALYRRQGKLEAAETLEECALRSRKQG). Phosphoserine is present on residues S565, S566, and S590. A disordered region spans residues 571-619 (RKLQGTEPRPSSSNMKRAASLNYLNQPNAAPLQTSRGLSASTVDLSSSS). Positions 592–608 (NYLNQPNAAPLQTSRGL) are enriched in polar residues. Low complexity predominate over residues 609 to 619 (SASTVDLSSSS). A Phosphothreonine modification is found at T612.

The protein belongs to the kinesin light chain family. As to quaternary structure, oligomeric complex composed of two heavy chains and two light chains.

It localises to the cytoplasm. Its subcellular location is the cytoskeleton. Its function is as follows. Kinesin is a microtubule-associated force-producing protein that may play a role in organelle transport. The light chain may function in coupling of cargo to the heavy chain or in the modulation of its ATPase activity. The protein is Kinesin light chain 4 (Klc4) of Rattus norvegicus (Rat).